The chain runs to 550 residues: Hydroxylamine reductase (550 aa).

Positions 3, 6, 18, and 25 each coordinate [2Fe-2S] cluster. Positions 249, 273, 317, 405, 433, 458, 492, and 494 each coordinate hybrid [4Fe-2O-2S] cluster. Cys405 bears the Cysteine persulfide mark.

It belongs to the HCP family. [2Fe-2S] cluster serves as cofactor. It depends on hybrid [4Fe-2O-2S] cluster as a cofactor.

Its subcellular location is the cytoplasm. It carries out the reaction A + NH4(+) + H2O = hydroxylamine + AH2 + H(+). Functionally, catalyzes the reduction of hydroxylamine to form NH(3) and H(2)O. The polypeptide is Hydroxylamine reductase (Salmonella dublin (strain CT_02021853)).